Here is a 202-residue protein sequence, read N- to C-terminus: Pectinesterase inhibitor 11 (202 aa).

An N-terminal signal peptide occupies residues 1–21 (MAKQIFYTLFLFLLSTAILTA). Residues Cys43 and Cys52 are joined by a disulfide bond. Asn76 carries N-linked (GlcNAc...) asparagine glycosylation. Cys109 and Cys160 are joined by a disulfide.

This sequence belongs to the PMEI family.

The protein resides in the secreted. It localises to the extracellular space. It is found in the apoplast. Functionally, pectin methylesterase (PME) inhibitor involved in the maintenance of cell wall integrity in response to necrotrophic pathogens. Modulates PME activity and pectin methylesterification during infection by Botrytis cinerea and contributes to resistance against the pathogen. The protein is Pectinesterase inhibitor 11 of Arabidopsis thaliana (Mouse-ear cress).